We begin with the raw amino-acid sequence, 305 residues long: Putative lipid kinase SaurJH9_0749 (305 aa).

The region spanning 3–139 (NKYTHGVLFY…YDVIKINNQY (137 aa)) is the DAGKc domain. ATP-binding positions include serine 44, 74–80 (GDGTVNE), and threonine 101. 3 residues coordinate Mg(2+): serine 220, aspartate 223, and glutamate 225. Glutamate 281 functions as the Proton acceptor in the catalytic mechanism.

The protein belongs to the diacylglycerol/lipid kinase family. Requires Mg(2+) as cofactor.

Functionally, may catalyze the ATP-dependent phosphorylation of lipids other than diacylglycerol (DAG). This chain is Putative lipid kinase SaurJH9_0749, found in Staphylococcus aureus (strain JH9).